The sequence spans 408 residues: Argininosuccinate synthase (408 aa).

Residues 10–18 and A37 each bind ATP; that span reads AYSGGLDTS. L-citrulline is bound by residues Y90 and S95. G120 is a binding site for ATP. L-aspartate-binding residues include T122, N126, and D127. N126 provides a ligand contact to L-citrulline. Residues R130, S181, S190, E266, and Y278 each contribute to the L-citrulline site.

It belongs to the argininosuccinate synthase family. Type 1 subfamily. Homotetramer.

The protein resides in the cytoplasm. It carries out the reaction L-citrulline + L-aspartate + ATP = 2-(N(omega)-L-arginino)succinate + AMP + diphosphate + H(+). Its pathway is amino-acid biosynthesis; L-arginine biosynthesis; L-arginine from L-ornithine and carbamoyl phosphate: step 2/3. The protein is Argininosuccinate synthase of Cereibacter sphaeroides (strain ATCC 17029 / ATH 2.4.9) (Rhodobacter sphaeroides).